We begin with the raw amino-acid sequence, 338 residues long: Phenylalanine--tRNA ligase alpha subunit (338 aa).

Glutamate 253 serves as a coordination point for Mg(2+).

It belongs to the class-II aminoacyl-tRNA synthetase family. Phe-tRNA synthetase alpha subunit type 1 subfamily. Tetramer of two alpha and two beta subunits. Requires Mg(2+) as cofactor.

Its subcellular location is the cytoplasm. It carries out the reaction tRNA(Phe) + L-phenylalanine + ATP = L-phenylalanyl-tRNA(Phe) + AMP + diphosphate + H(+). This is Phenylalanine--tRNA ligase alpha subunit from Geotalea uraniireducens (strain Rf4) (Geobacter uraniireducens).